The primary structure comprises 180 residues: Signaling threshold-regulating transmembrane adapter 1 (180 aa).

Residues 1 to 24 are Extracellular-facing; it reads MSRDYNCTTDDQLAWGIPSISHAW. The N-linked (GlcNAc...) asparagine glycan is linked to asparagine 6. Residues 25–45 form a helical; Signal-anchor for type III membrane protein membrane-spanning segment; that stretch reads GLWALLGVVTVLLLISLAALL. Over 46–180 the chain is Cytoplasmic; it reads SQWTRGRRRN…AYANSQPAPS (135 aa). Serine 63 and serine 66 each carry phosphoserine. Tyrosine 73 carries the post-translational modification Phosphotyrosine. Residues 73–76 form an interaction with GRB2 region; sequence YGNL. Residues 81–103 are disordered; that stretch reads TGRLSQEPRSEEQDPPSSGGLAR. Residues serine 85 and serine 90 each carry the phosphoserine modification. A phosphotyrosine mark is found at tyrosine 111, tyrosine 132, and tyrosine 153. The interval 130–135 is interaction with PTPN11; that stretch reads IKYCEV. The tract at residues 153–156 is interaction with CSK; the sequence is YASV. Residue serine 166 is modified to Phosphoserine. Tyrosine 172 is subject to Phosphotyrosine. Residues 172–175 are interaction with GRB2; it reads YANS.

In terms of assembly, homodimer; disulfide-linked. When phosphorylated, interacts with PTPN11/SHP2, GRB2 and CSK. In terms of processing, phosphorylated on tyrosines upon TCR activation; which leads to the recruitment of PTPN11, GRB2 and CSK. As to expression, expressed in thymus and spleen, with highest levels in immature thymocytes (at protein level).

It is found in the cell membrane. Its function is as follows. Negatively regulates T-cell antigen receptor (TCR)-mediated signaling. Involved in positive selection of T-cells. The sequence is that of Signaling threshold-regulating transmembrane adapter 1 (Sit1) from Mus musculus (Mouse).